Consider the following 437-residue polypeptide: MSMFLDTAKISVQAGRGGDGMVAFRREKYVPNGGPWGGDGGKGGSVIFRVDEGLRTLMDFRYNRKFKAKSGEKGMTKGMHGRGAEDLIVFVPQGTTVRDAETGKVIIDLVEHGQEVVIAKGGRGGRGNIRFATPRNPAPEIAENGEPGEERQLELELKILADVGLVGFPSVGKSTLLSVVSSAKPKIGAYHFTTIVPNLGMVRTKSGDSFAMADLPGLIEGASQGVGLGTQFLRHIERTRVILHVIDMSASEGRDPYEDYVSINNELETYNLRLMERPQIIVANKMDMPEAQENLKAFKKKLAAQYDEFDDLPMIFPISSLAHQGLENLLEATAELLAKTDEFLLYDESDLVDEEAYYGFAKTEKDFEITRDDDATWVLSGEKLERLFVMTNMERDESIMKFARQLRGMGVDEALRERGAKDGDPVRIGKFEFEFVD.

The Obg domain occupies 2–160; that stretch reads SMFLDTAKIS…RQLELELKIL (159 aa). Residues 161–338 form the OBG-type G domain; that stretch reads ADVGLVGFPS…LLEATAELLA (178 aa). Residues 167–174, 192–196, 214–217, 284–287, and 319–321 contribute to the GTP site; these read GFPSVGKS, FTTIV, DLPG, NKMD, and SSL. Residues Ser-174 and Thr-194 each coordinate Mg(2+). Positions 359–437 constitute an OCT domain; it reads GFAKTEKDFE…IGKFEFEFVD (79 aa).

This sequence belongs to the TRAFAC class OBG-HflX-like GTPase superfamily. OBG GTPase family. Monomer. Mg(2+) is required as a cofactor.

The protein localises to the cytoplasm. Functionally, an essential GTPase which binds GTP, GDP and possibly (p)ppGpp with moderate affinity, with high nucleotide exchange rates and a fairly low GTP hydrolysis rate. Plays a role in control of the cell cycle, stress response, ribosome biogenesis and in those bacteria that undergo differentiation, in morphogenesis control. In Streptococcus pyogenes serotype M2 (strain MGAS10270), this protein is GTPase Obg.